The following is a 310-amino-acid chain: Olfactory receptor 10G2 (310 aa).

Over 1 to 29 (MGKTKNTSLDAVVTDFILLGLSHPPNLRS) the chain is Extracellular. Asparagine 6 is a glycosylation site (N-linked (GlcNAc...) asparagine). Residues 30–50 (LLFLVFFIIYILTQLGNLLIL) form a helical membrane-spanning segment. Residues 51 to 58 (LTMWADPK) lie on the Cytoplasmic side of the membrane. A helical transmembrane segment spans residues 59–80 (LCARPMYILLGVLSFLDMWLSS). The Extracellular segment spans residues 81–104 (VTVPLLILDFTPSIKAIPFGGCVA). A disulfide bridge connects residues cysteine 102 and cysteine 194. A helical transmembrane segment spans residues 105–125 (QLYFFHFLGSTQCFLYTLMAY). Residues 126-144 (DRYLAICQPLRYPVLMNGR) lie on the Cytoplasmic side of the membrane. The helical transmembrane segment at 145 to 165 (LCTVLVAGAWVAGSMHGSIQA) threads the bilayer. The Extracellular portion of the chain corresponds to 166-202 (TLTFRLPYCGPNQVDYFICDIPAVLRLACADTTVNEL). A helical membrane pass occupies residues 203–222 (VTFVDVGVVAASCFMLILLS). Topologically, residues 223-242 (YANIVNAILKIRTTDGRRRA) are cytoplasmic. The chain crosses the membrane as a helical span at residues 243–263 (FSTCGSHLIVVTVYYVPCIFI). At 264–274 (YLRAGSKDPLD) the chain is on the extracellular side. The chain crosses the membrane as a helical span at residues 275–295 (GAAAVFYTVVTPLLNPLIYTL). The Cytoplasmic segment spans residues 296–310 (RNQEVKSALKRITAG).

The protein belongs to the G-protein coupled receptor 1 family.

Its subcellular location is the cell membrane. Its function is as follows. Odorant receptor. The protein is Olfactory receptor 10G2 (OR10G2) of Homo sapiens (Human).